The primary structure comprises 553 residues: CTP synthase (553 aa).

The tract at residues 1-270 is amidoligase domain; that stretch reads MTKYVFVTGG…DDLICRELEL (270 aa). Ser13 provides a ligand contact to CTP. Ser13 provides a ligand contact to UTP. Residues 14-19 and Asp71 contribute to the ATP site; that span reads SLGKGI. Asp71 and Glu144 together coordinate Mg(2+). CTP is bound by residues 151-153, 191-196, and Lys227; these read DIE and KTKPTQ. UTP-binding positions include 191–196 and Lys227; that span reads KTKPTQ. In terms of domain architecture, Glutamine amidotransferase type-1 spans 295-547; the sequence is TIGMVGKYVE…IKAALIHQDA (253 aa). Gly356 is a binding site for L-glutamine. Cys383 (nucleophile; for glutamine hydrolysis) is an active-site residue. L-glutamine contacts are provided by residues 384–387, Glu407, and Arg473; that span reads LGMQ. Residues His520 and Glu522 contribute to the active site.

It belongs to the CTP synthase family. In terms of assembly, homotetramer.

It carries out the reaction UTP + L-glutamine + ATP + H2O = CTP + L-glutamate + ADP + phosphate + 2 H(+). The catalysed reaction is L-glutamine + H2O = L-glutamate + NH4(+). The enzyme catalyses UTP + NH4(+) + ATP = CTP + ADP + phosphate + 2 H(+). Its pathway is pyrimidine metabolism; CTP biosynthesis via de novo pathway; CTP from UDP: step 2/2. Allosterically activated by GTP, when glutamine is the substrate; GTP has no effect on the reaction when ammonia is the substrate. The allosteric effector GTP functions by stabilizing the protein conformation that binds the tetrahedral intermediate(s) formed during glutamine hydrolysis. Inhibited by the product CTP, via allosteric rather than competitive inhibition. Its function is as follows. Catalyzes the ATP-dependent amination of UTP to CTP with either L-glutamine or ammonia as the source of nitrogen. Regulates intracellular CTP levels through interactions with the four ribonucleotide triphosphates. This Polynucleobacter asymbioticus (strain DSM 18221 / CIP 109841 / QLW-P1DMWA-1) (Polynucleobacter necessarius subsp. asymbioticus) protein is CTP synthase.